We begin with the raw amino-acid sequence, 498 residues long: Lysine--tRNA ligase (498 aa).

E409 and E416 together coordinate Mg(2+).

It belongs to the class-II aminoacyl-tRNA synthetase family. As to quaternary structure, homodimer. Mg(2+) is required as a cofactor.

It localises to the cytoplasm. It catalyses the reaction tRNA(Lys) + L-lysine + ATP = L-lysyl-tRNA(Lys) + AMP + diphosphate. This chain is Lysine--tRNA ligase, found in Dichelobacter nodosus (strain VCS1703A).